The following is a 533-amino-acid chain: Lysine--tRNA ligase (533 aa).

The 'HIGH' region signature appears at 28 to 36 (PSGHIHIGN). Positions 278-282 (PMSSS) match the 'KMSKS' region motif.

It belongs to the class-I aminoacyl-tRNA synthetase family.

The protein resides in the cytoplasm. It carries out the reaction tRNA(Lys) + L-lysine + ATP = L-lysyl-tRNA(Lys) + AMP + diphosphate. The sequence is that of Lysine--tRNA ligase (lysS) from Methanococcus maripaludis (strain DSM 14266 / JCM 13030 / NBRC 101832 / S2 / LL).